The sequence spans 288 residues: Acetyl-coenzyme A carboxylase carboxyl transferase subunit beta (288 aa).

The 257-residue stretch at 32-288 (LFAKCPACKH…LELHTEVENV (257 aa)) folds into the CoA carboxyltransferase N-terminal domain. Residues Cys-36, Cys-39, Cys-54, and Cys-57 each contribute to the Zn(2+) site. The C4-type zinc-finger motif lies at 36–57 (CPACKHTIYQKDLGKNKVCPNC).

This sequence belongs to the AccD/PCCB family. In terms of assembly, acetyl-CoA carboxylase is a heterohexamer composed of biotin carboxyl carrier protein (AccB), biotin carboxylase (AccC) and two subunits each of ACCase subunit alpha (AccA) and ACCase subunit beta (AccD). It depends on Zn(2+) as a cofactor.

It is found in the cytoplasm. The catalysed reaction is N(6)-carboxybiotinyl-L-lysyl-[protein] + acetyl-CoA = N(6)-biotinyl-L-lysyl-[protein] + malonyl-CoA. Its pathway is lipid metabolism; malonyl-CoA biosynthesis; malonyl-CoA from acetyl-CoA: step 1/1. In terms of biological role, component of the acetyl coenzyme A carboxylase (ACC) complex. Biotin carboxylase (BC) catalyzes the carboxylation of biotin on its carrier protein (BCCP) and then the CO(2) group is transferred by the transcarboxylase to acetyl-CoA to form malonyl-CoA. The protein is Acetyl-coenzyme A carboxylase carboxyl transferase subunit beta of Lactococcus lactis subsp. cremoris (strain MG1363).